Here is a 352-residue protein sequence, read N- to C-terminus: Quinolinate synthase (352 aa).

Histidine 48 and serine 69 together coordinate iminosuccinate. Position 114 (cysteine 114) interacts with [4Fe-4S] cluster. Residues 140 to 142 (YAN) and serine 157 contribute to the iminosuccinate site. Position 201 (cysteine 201) interacts with [4Fe-4S] cluster. Iminosuccinate contacts are provided by residues 227-229 (HPE) and threonine 244. Position 298 (cysteine 298) interacts with [4Fe-4S] cluster.

Belongs to the quinolinate synthase family. Type 1 subfamily. It depends on [4Fe-4S] cluster as a cofactor.

The protein resides in the cytoplasm. The enzyme catalyses iminosuccinate + dihydroxyacetone phosphate = quinolinate + phosphate + 2 H2O + H(+). The protein operates within cofactor biosynthesis; NAD(+) biosynthesis; quinolinate from iminoaspartate: step 1/1. In terms of biological role, catalyzes the condensation of iminoaspartate with dihydroxyacetone phosphate to form quinolinate. This Pseudomonas syringae pv. tomato (strain ATCC BAA-871 / DC3000) protein is Quinolinate synthase.